We begin with the raw amino-acid sequence, 620 residues long: 1-deoxy-D-xylulose-5-phosphate synthase (620 aa).

Residues histidine 80 and 121 to 123 (GHS) contribute to the thiamine diphosphate site. Residue aspartate 152 participates in Mg(2+) binding. Residues 153-154 (GA), asparagine 181, tyrosine 288, and glutamate 370 contribute to the thiamine diphosphate site. Asparagine 181 contributes to the Mg(2+) binding site.

It belongs to the transketolase family. DXPS subfamily. Homodimer. Mg(2+) is required as a cofactor. Thiamine diphosphate serves as cofactor.

It carries out the reaction D-glyceraldehyde 3-phosphate + pyruvate + H(+) = 1-deoxy-D-xylulose 5-phosphate + CO2. It functions in the pathway metabolic intermediate biosynthesis; 1-deoxy-D-xylulose 5-phosphate biosynthesis; 1-deoxy-D-xylulose 5-phosphate from D-glyceraldehyde 3-phosphate and pyruvate: step 1/1. Functionally, catalyzes the acyloin condensation reaction between C atoms 2 and 3 of pyruvate and glyceraldehyde 3-phosphate to yield 1-deoxy-D-xylulose-5-phosphate (DXP). The sequence is that of 1-deoxy-D-xylulose-5-phosphate synthase from Escherichia coli O6:K15:H31 (strain 536 / UPEC).